The sequence spans 254 residues: Glutamate racemase (254 aa).

Residues 7 to 8 (DS) and 39 to 40 (YG) each bind substrate. Cys-70 serves as the catalytic Proton donor/acceptor. 71-72 (NT) is a binding site for substrate. Catalysis depends on Cys-178, which acts as the Proton donor/acceptor. 179 to 180 (TH) provides a ligand contact to substrate.

It belongs to the aspartate/glutamate racemases family.

The enzyme catalyses L-glutamate = D-glutamate. Its pathway is cell wall biogenesis; peptidoglycan biosynthesis. Its function is as follows. Provides the (R)-glutamate required for cell wall biosynthesis. This chain is Glutamate racemase, found in Aquifex aeolicus (strain VF5).